The chain runs to 248 residues: Triosephosphate isomerase (248 aa).

Residues Asn10 and Lys12 each contribute to the substrate site. His95 (electrophile) is an active-site residue. The active-site Proton acceptor is Glu165.

It belongs to the triosephosphate isomerase family. As to quaternary structure, homodimer.

The catalysed reaction is D-glyceraldehyde 3-phosphate = dihydroxyacetone phosphate. It participates in carbohydrate biosynthesis; gluconeogenesis. The protein operates within carbohydrate degradation; glycolysis; D-glyceraldehyde 3-phosphate from glycerone phosphate: step 1/1. The protein is Triosephosphate isomerase (TPI1) of Zygosaccharomyces bailii.